We begin with the raw amino-acid sequence, 503 residues long: ATP synthase subunit alpha (503 aa).

170 to 177 (GDRKTGKT) is a binding site for ATP.

The protein belongs to the ATPase alpha/beta chains family. As to quaternary structure, F-type ATPases have 2 components, CF(1) - the catalytic core - and CF(0) - the membrane proton channel. CF(1) has five subunits: alpha(3), beta(3), gamma(1), delta(1), epsilon(1). CF(0) has four main subunits: a, b, b' and c.

Its subcellular location is the cellular thylakoid membrane. The enzyme catalyses ATP + H2O + 4 H(+)(in) = ADP + phosphate + 5 H(+)(out). Produces ATP from ADP in the presence of a proton gradient across the membrane. The alpha chain is a regulatory subunit. This chain is ATP synthase subunit alpha, found in Rippkaea orientalis (strain PCC 8801 / RF-1) (Cyanothece sp. (strain PCC 8801)).